A 251-amino-acid chain; its full sequence is Adenosine 5'-phosphosulfate reductase (251 aa).

Cys121, Cys122, Cys204, and Cys207 together coordinate [4Fe-4S] cluster. The active-site Nucleophile; cysteine thiosulfonate intermediate is Cys232.

The protein belongs to the PAPS reductase family. CysH subfamily. [4Fe-4S] cluster is required as a cofactor.

Its subcellular location is the cytoplasm. The enzyme catalyses [thioredoxin]-disulfide + sulfite + AMP + 2 H(+) = adenosine 5'-phosphosulfate + [thioredoxin]-dithiol. The protein operates within sulfur metabolism; hydrogen sulfide biosynthesis; sulfite from sulfate. Functionally, catalyzes the formation of sulfite from adenosine 5'-phosphosulfate (APS) using thioredoxin as an electron donor. This chain is Adenosine 5'-phosphosulfate reductase, found in Sinorhizobium fredii (strain USDA 257).